Consider the following 521-residue polypeptide: MIPKIYKKIKWLQSNPLILKKILRGIEREALRTDIHGTIINTAYPQDKIGSALTHKWITTDFSESLLEFITPTNASTNYILKFLNDTHKFVNDNLIQEYFWPFSIPPCKKYMHSIKLSKYGTSNLGQVKTLYRKGLKHRYGILMNIISGVHYNFSLPRIFWNHWKKIHHKNTQYNTTSEGYLCLIRNYYKFGWIIPYLFGASPAVEPLFIKNKKHNYKFKKHHGMLYLPWSTSLRLSDLGHTNQSIKKLKLTFNSLSEYVLALEHGIKTPSKQFKNLGLYDQFGNFKQINTNLLQTENELYTYIRPKQKLKNCESLSAALRNRGIEYVEIRALDINPFTSTGVDKNQILLLDLFLIWCVLADSPKISSQEFHFFLKNWHTIITKGRKPKQKININIYNTKNTIQTIGKTILYDLFYIAEILDSLSNNNNYQETCKNLILYFDYPELTYSEKLLNKFMCYGIYETGANLFVKYKQKLHNDSFKILSKKDLNNEMMKSNNSQKLIEKQDTLNFKEYLNLYYTK.

It belongs to the glutamate--cysteine ligase type 1 family. Type 1 subfamily.

The enzyme catalyses L-cysteine + L-glutamate + ATP = gamma-L-glutamyl-L-cysteine + ADP + phosphate + H(+). It participates in sulfur metabolism; glutathione biosynthesis; glutathione from L-cysteine and L-glutamate: step 1/2. The sequence is that of Glutamate--cysteine ligase (gshA) from Buchnera aphidicola subsp. Baizongia pistaciae (strain Bp).